Here is a 347-residue protein sequence, read N- to C-terminus: Sensor protein VraS (347 aa).

The next 2 helical transmembrane spans lie at 13 to 33 and 43 to 63; these read ILVYSMLAAFLFIDKVFVNII and IFGIPVFLFLNLIIILLCIIV. The region spanning 150–341 is the Histidine kinase domain; sequence RLARELHDSV…RIEVKAPLNK (192 aa). Phosphohistidine is present on histidine 156.

In terms of processing, autophosphorylated on His-156.

It is found in the cell membrane. It catalyses the reaction ATP + protein L-histidine = ADP + protein N-phospho-L-histidine.. Member of the two-component regulatory system PprA/PprB involved in biofilm formation by controlling the expression of many related genes including type IVb pili major subunit flp pilin, adhesin bapA or cupE fimbriae. Also modulates quorum-sensing signal production acting on both negative and positive modulators. Functions as a heme sensor histidine kinase which is autophosphorylated at a histidine residue and transfers its phosphate group to PprB. This Staphylococcus aureus (strain Mu3 / ATCC 700698) protein is Sensor protein VraS (vraS).